Consider the following 718-residue polypeptide: Methionine--tRNA ligase (718 aa).

A 'HIGH' region motif is present at residues 12–22 (PYANGDIHLGH). Zn(2+) contacts are provided by Cys143, Cys146, Cys156, and Cys159. The 'KMSKS' region signature appears at 349–353 (KMSKS). Lys352 contacts ATP. The disordered stretch occupies residues 573–599 (AAPAAKVASSQQRHAEKQQHEAQSAET). Residues 608–718 (DFTKVDLRIA…TGAASGMRVK (111 aa)) form the tRNA-binding domain.

Belongs to the class-I aminoacyl-tRNA synthetase family. MetG type 1 subfamily. As to quaternary structure, homodimer. Requires Zn(2+) as cofactor.

It localises to the cytoplasm. It carries out the reaction tRNA(Met) + L-methionine + ATP = L-methionyl-tRNA(Met) + AMP + diphosphate. Its function is as follows. Is required not only for elongation of protein synthesis but also for the initiation of all mRNA translation through initiator tRNA(fMet) aminoacylation. This chain is Methionine--tRNA ligase, found in Aromatoleum aromaticum (strain DSM 19018 / LMG 30748 / EbN1) (Azoarcus sp. (strain EbN1)).